Consider the following 409-residue polypeptide: Probable peptidoglycan glycosyltransferase FtsW (409 aa).

9 consecutive transmembrane segments (helical) span residues 42 to 62 (LFTL…SASL), 72 to 92 (PFHF…VMLA), 108 to 128 (LLLL…EVNG), 135 to 155 (VGPI…IYMA), 178 to 198 (LLFI…VVVL), 213 to 233 (LWQF…LIIV), 303 to 323 (FLGV…ALII), 337 to 357 (YLAY…IGVA), and 368 to 388 (LPLV…VGLL).

It belongs to the SEDS family. FtsW subfamily.

The protein localises to the cell inner membrane. It catalyses the reaction [GlcNAc-(1-&gt;4)-Mur2Ac(oyl-L-Ala-gamma-D-Glu-L-Lys-D-Ala-D-Ala)](n)-di-trans,octa-cis-undecaprenyl diphosphate + beta-D-GlcNAc-(1-&gt;4)-Mur2Ac(oyl-L-Ala-gamma-D-Glu-L-Lys-D-Ala-D-Ala)-di-trans,octa-cis-undecaprenyl diphosphate = [GlcNAc-(1-&gt;4)-Mur2Ac(oyl-L-Ala-gamma-D-Glu-L-Lys-D-Ala-D-Ala)](n+1)-di-trans,octa-cis-undecaprenyl diphosphate + di-trans,octa-cis-undecaprenyl diphosphate + H(+). Its pathway is cell wall biogenesis; peptidoglycan biosynthesis. In terms of biological role, peptidoglycan polymerase that is essential for cell division. The polypeptide is Probable peptidoglycan glycosyltransferase FtsW (Idiomarina loihiensis (strain ATCC BAA-735 / DSM 15497 / L2-TR)).